We begin with the raw amino-acid sequence, 342 residues long: Isopentenyl-diphosphate delta-isomerase (342 aa).

A substrate-binding site is contributed by 11-12; sequence RK. Residues Ser-68, 69–71, Ser-99, and Asn-127 each bind FMN; that span reads SMT. A substrate-binding site is contributed by 99 to 101; the sequence is SMR. Gln-162 lines the substrate pocket. Residue Glu-163 coordinates Mg(2+). FMN-binding positions include Lys-194, Thr-224, 274–276, and 295–296; these read GLK and AG.

This sequence belongs to the IPP isomerase type 2 family. Homooctamer. Dimer of tetramers. FMN serves as cofactor. The cofactor is NADPH. Requires Mg(2+) as cofactor.

It localises to the cytoplasm. It carries out the reaction isopentenyl diphosphate = dimethylallyl diphosphate. In terms of biological role, involved in the biosynthesis of isoprenoids. Catalyzes the 1,3-allylic rearrangement of the homoallylic substrate isopentenyl (IPP) to its allylic isomer, dimethylallyl diphosphate (DMAPP). This is Isopentenyl-diphosphate delta-isomerase from Rickettsia rickettsii (strain Iowa).